We begin with the raw amino-acid sequence, 251 residues long: Flap endonuclease Xni (251 aa).

Mg(2+) is bound at residue D104. The 5'-3' exonuclease domain maps to 160-250; the sequence is VLPRQLPDYW…SGNLQQLRLK (91 aa). K(+)-binding residues include L171, A172, P180, V182, and V185. Residues 184–189 are interaction with DNA; it reads GVGAKT.

Belongs to the Xni family. Mg(2+) is required as a cofactor. Requires K(+) as cofactor.

Functionally, has flap endonuclease activity. During DNA replication, flap endonucleases cleave the 5'-overhanging flap structure that is generated by displacement synthesis when DNA polymerase encounters the 5'-end of a downstream Okazaki fragment. The protein is Flap endonuclease Xni of Yersinia pseudotuberculosis serotype I (strain IP32953).